Here is a 484-residue protein sequence, read N- to C-terminus: 60S ribosome subunit biogenesis protein NOP8 (484 aa).

Residues Lys7 to Pro83 enclose the RRM domain. Residues Ser234, Ser239, and Ser268 each carry the phosphoserine modification. The tract at residues Asp260–Phe330 is disordered. A compositionally biased stretch (acidic residues) spans Asp320–Glu329. Ser370 is modified (phosphoserine).

As to quaternary structure, interacts with NIP7 and RRP43. Together with DBP6, URB1, URB2 and RSA3, forms an RNA-independent complex, which is required during early maturation of nascent 60S ribosomal subunits.

Its subcellular location is the nucleus. The protein localises to the nucleolus. Functionally, required for 60S ribosomal subunit synthesis. May be involved in assembly reactions occurring within late pre-ribosomal particles. The sequence is that of 60S ribosome subunit biogenesis protein NOP8 (NOP8) from Saccharomyces cerevisiae (strain ATCC 204508 / S288c) (Baker's yeast).